We begin with the raw amino-acid sequence, 271 residues long: Putative phosphoenolpyruvate synthase regulatory protein (271 aa).

152–159 is a binding site for ADP; sequence GVSRCGKT.

Belongs to the pyruvate, phosphate/water dikinase regulatory protein family. PSRP subfamily.

The enzyme catalyses [pyruvate, water dikinase] + ADP = [pyruvate, water dikinase]-phosphate + AMP + H(+). It catalyses the reaction [pyruvate, water dikinase]-phosphate + phosphate + H(+) = [pyruvate, water dikinase] + diphosphate. Functionally, bifunctional serine/threonine kinase and phosphorylase involved in the regulation of the phosphoenolpyruvate synthase (PEPS) by catalyzing its phosphorylation/dephosphorylation. This Legionella pneumophila (strain Corby) protein is Putative phosphoenolpyruvate synthase regulatory protein.